Here is a 204-residue protein sequence, read N- to C-terminus: Protein G1-like5 (204 aa).

Disordered regions lie at residues 1–45 (MEFV…ESQK) and 157–204 (RARG…GAAA). Residues 26–39 (TGATSASAAGASPS) are compositionally biased toward low complexity. In terms of domain architecture, ALOG spans 40–167 (RYESQKRRDW…ARGVSYEKKK (128 aa)). Residues 165 to 169 (KKKRK) carry the Nuclear localization signal motif.

Belongs to the plant homeotic and developmental regulators ALOG protein family.

It localises to the nucleus. Functionally, probable transcription regulator that acts as a developmental regulator by promoting cell growth in response to light. The sequence is that of Protein G1-like5 (G1L5) from Oryza sativa subsp. japonica (Rice).